A 227-amino-acid polypeptide reads, in one-letter code: Small ribosomal subunit protein uS3 (227 aa).

Residues 39–107 (VRQLLQKRLK…PVHITIEEVR (69 aa)) form the KH type-2 domain.

It belongs to the universal ribosomal protein uS3 family. In terms of assembly, part of the 30S ribosomal subunit. Forms a tight complex with proteins S10 and S14.

In terms of biological role, binds the lower part of the 30S subunit head. Binds mRNA in the 70S ribosome, positioning it for translation. The sequence is that of Small ribosomal subunit protein uS3 (rpsC) from Coxiella burnetii (strain RSA 493 / Nine Mile phase I).